Reading from the N-terminus, the 384-residue chain is Urea transporter 1 (384 aa).

The residue at position 39 (Glu39) is a Phosphoserine. The next 5 membrane-spanning stretches (helical) occupy residues 61–81 (ISQV…VGLL), 85–105 (PWWA…ALLL), 111–131 (AIAA…MAVF), 138–158 (FWWL…FSSA), and 168–188 (LPVF…ATGH). An N-linked (GlcNAc...) asparagine glycan is attached at Asn206. The next 4 helical transmembrane spans lie at 250 to 270 (LMCL…LSLA), 276 to 296 (IYFG…GGMF), 305 to 325 (LLAL…AHLM), and 327 to 347 (VVHL…FLLL).

This sequence belongs to the urea transporter family. As to quaternary structure, homotrimer; each subunit contains a pore through which urea permeates. Identified in a complex with STOM. In terms of processing, N-glycosylated in red blood cells, as well as in most non-erythroid tissues, except in the gastrocnemius muscle and in the gastrointestinal tract, including liver, colon and stomach. In terms of tissue distribution, expressed in brain, kidney, heart, liver, lung, skeletal muscle, spleen, testis, ureter and urinary bladder (at protein level). Along the gastrointestinal tract, detected in colon, jejunum and stomach (at protein level). In the kidney, expressed in some microvessels of the inner and outer medulla, but not all (at protein level). Not detected in the cortex (at protein level). Detected in the urothelium all along the urinary tract, including the papilla surface, the ureter, the bladder and the urethra (at protein level). In the brain, expressed at the border of the corpus callosum and striatum in astrocytic cellular processes surrounding blood microvessels (at protein level). Detected in erythrocytes (at protein level).

Its subcellular location is the cell membrane. It localises to the basolateral cell membrane. It catalyses the reaction urea(in) = urea(out). Its function is as follows. Mediates the transport of urea driven by a concentration gradient across the cell membranes of erythrocytes and the renal inner medullary collecting duct which is critical to the urinary concentrating mechanism. Facilitates water transport in erythrocytes. This chain is Urea transporter 1 (Slc14a1), found in Mus musculus (Mouse).